Here is a 369-residue protein sequence, read N- to C-terminus: Extracellular signal-regulated kinase 2 (369 aa).

One can recognise a Protein kinase domain in the interval 14-304 (YEVLQKIGKG…AEEALAHPFV (291 aa)). ATP contacts are provided by residues 20 to 28 (IGKGAYGIV) and Lys43. Asp137 (proton acceptor) is an active-site residue. Thr176 carries the phosphothreonine modification. A TXY motif is present at residues 176–178 (TEY). Tyr178 bears the Phosphotyrosine mark. Positions 346–369 (KKKEERKKQTNPTKPDTTAPTLST) are disordered. The span at 355–369 (TNPTKPDTTAPTLST) shows a compositional bias: polar residues.

Belongs to the protein kinase superfamily. CMGC Ser/Thr protein kinase family. MAP kinase subfamily. Mg(2+) serves as cofactor. Dually phosphorylated on Thr-176 and Tyr-178, which activates the enzyme.

It carries out the reaction L-seryl-[protein] + ATP = O-phospho-L-seryl-[protein] + ADP + H(+). The catalysed reaction is L-threonyl-[protein] + ATP = O-phospho-L-threonyl-[protein] + ADP + H(+). Its activity is regulated as follows. Activated by tyrosine and threonine phosphorylation. Implicated in the relay of the cAMP chemotactic signal and cell differentiation. Important for receptor-mediated activation of adenylyl cyclase. This Dictyostelium discoideum (Social amoeba) protein is Extracellular signal-regulated kinase 2 (erkB).